Consider the following 190-residue polypeptide: Guanylate kinase (190 aa).

In terms of domain architecture, Guanylate kinase-like spans 8-188 (GRLVILAGPS…AVSAIKAVLL (181 aa)). Residue 15 to 22 (GPSAVGKS) participates in ATP binding.

It belongs to the guanylate kinase family.

The protein localises to the cytoplasm. The enzyme catalyses GMP + ATP = GDP + ADP. Essential for recycling GMP and indirectly, cGMP. The chain is Guanylate kinase from Corynebacterium efficiens (strain DSM 44549 / YS-314 / AJ 12310 / JCM 11189 / NBRC 100395).